The primary structure comprises 956 residues: Bromodomain testis-specific protein (956 aa).

The region spanning 26 to 132 (RLTNQLQFLQ…KLFMQKLSQM (107 aa)) is the Bromo 1 domain. Phosphoserine is present on S186. The Nuclear localization signal signature appears at 208-219 (KGVKRRADTTTP). Residues 210 to 239 (VKRRADTTTPTTSIAKASSESPPTLRETKP) form a disordered region. The segment covering 216-231 (TTTPTTSIAKASSESP) has biased composition (polar residues). The 110-residue stretch at 266–375 (VKVTEQLKHC…DVFELHFAKI (110 aa)) folds into the Bromo 2 domain. Disordered regions lie at residues 391–420 (NSAQALSRESSSEASSGDASSEDSEDERVQ), 442–508 (VPLR…PMNY), 607–747 (NQLN…HSQQ), and 859–934 (LEHN…RREA). Residues 392 to 409 (SAQALSRESSSEASSGDA) are compositionally biased toward low complexity. Residues 417-442 (ERVQHLAKLQEQLNAVHQQLQVLSQV) are a coiled coil. A compositionally biased stretch (basic residues) spans 445–463 (RKLKKKNEKSKRAPKRKKV). Positions 496–578 (KSEEEDNAKP…ACLRKRSLKP (83 aa)) constitute an NET domain. Positions 625-640 (PPPPPPPPPPPPPPPE) are enriched in pro residues. The span at 649–688 (DSSSSSGSGSGSSSSSSGSSSSSSSSGSASSSSDSSSSDS) shows a compositional bias: low complexity. Residues 714–724 (KQIQSSVQDIT) show a composition bias toward polar residues. A coiled-coil region spans residues 844-940 (EKEVKARTQE…RREAMAGTID (97 aa)). Composition is skewed to basic and acidic residues over residues 859–874 (LEHNAKDPKVSQENQR) and 915–934 (LLKDRNLAREKEQERRRREA).

It belongs to the BET family. In terms of assembly, interacts with SMARCE1. Interacts with mRNA splicing machinery proteins SRSF2, DDX5, HNRNPK and TARDBP. Interacts with the acetylated N-terminus of histone H1, H2, H3 and H4. Interacts with P-TEFb components CDK9 and CCNT1/cyclin-T1. Ubiquitinated in a SPOP-dependent manner, leading to proteasomal degradation. As to expression, testis-specific. Expressed in germinal cells from the early meiotic (pachytene) spermatocytes and during spermiogenesis in the round and elongating spermatids until the condensed late spermatids. No expression seen in spermatogonia.

The protein localises to the nucleus. Testis-specific chromatin protein that specifically binds histone H4 acetylated at 'Lys-5' and 'Lys-8' (H4K5ac and H4K8ac, respectively) and plays a key role in spermatogenesis. Required in late pachytene spermatocytes: plays a role in meiotic and post-meiotic cells by binding to acetylated histones at the promoter of specific meiotic and post-meiotic genes, facilitating their activation at the appropriate time. In the post-meiotic phase of spermatogenesis, binds to hyperacetylated histones and participates in their general removal from DNA. Also recognizes and binds a subset of butyrylated histones: able to bind histone H4 butyrylated at 'Lys-8' (H4K8ac), while it is not able to bind H4 butyrylated at 'Lys-5' (H4K5ac). Also acts as a component of the splicing machinery in pachytene spermatocytes and round spermatids and participates in 3'-UTR truncation of specific mRNAs in post-meiotic spermatids. Required for chromocenter organization, a structure comprised of peri-centromeric heterochromatin. This Mus musculus (Mouse) protein is Bromodomain testis-specific protein (Brdt).